Here is an 81-residue protein sequence, read N- to C-terminus: Putative defensin-like protein 31 (81 aa).

Positions 1–26 are cleaved as a signal peptide; sequence MTSSSKCLFFVFLCLAALLTPYLAEA. Cystine bridges form between Cys38–Cys58, Cys44–Cys70, and Cys48–Cys72.

The protein belongs to the DEFL family.

The protein resides in the secreted. This is Putative defensin-like protein 31 from Arabidopsis thaliana (Mouse-ear cress).